The sequence spans 251 residues: 5'-nucleotidase SurE (251 aa).

Positions 8, 9, 39, and 95 each coordinate a divalent metal cation.

This sequence belongs to the SurE nucleotidase family. A divalent metal cation is required as a cofactor.

It localises to the cytoplasm. The catalysed reaction is a ribonucleoside 5'-phosphate + H2O = a ribonucleoside + phosphate. Nucleotidase that shows phosphatase activity on nucleoside 5'-monophosphates. This Clostridium botulinum (strain Eklund 17B / Type B) protein is 5'-nucleotidase SurE.